We begin with the raw amino-acid sequence, 341 residues long: Methionine import ATP-binding protein MetN 2 (341 aa).

Positions 2-241 (IELKEVVKEY…PQHAVTKRFV (240 aa)) constitute an ABC transporter domain. An ATP-binding site is contributed by 38–45 (GFSGAGKS).

Belongs to the ABC transporter superfamily. Methionine importer (TC 3.A.1.24) family. As to quaternary structure, the complex is composed of two ATP-binding proteins (MetN), two transmembrane proteins (MetI) and a solute-binding protein (MetQ).

Its subcellular location is the cell membrane. The enzyme catalyses L-methionine(out) + ATP + H2O = L-methionine(in) + ADP + phosphate + H(+). It carries out the reaction D-methionine(out) + ATP + H2O = D-methionine(in) + ADP + phosphate + H(+). Its function is as follows. Part of the ABC transporter complex MetNIQ involved in methionine import. Responsible for energy coupling to the transport system. The polypeptide is Methionine import ATP-binding protein MetN 2 (Staphylococcus aureus (strain MRSA252)).